Here is a 310-residue protein sequence, read N- to C-terminus: Thioesterase pytI (310 aa).

2 helical membrane-spanning segments follow: residues 14 to 34 (SLTP…YFAL) and 95 to 115 (LLGG…IFVA). The interval 168–195 (TLSDDASTTTSSDNSRASTDHGADSEVE) is disordered. Residues 170–184 (SDDASTTTSSDNSRA) are compositionally biased toward low complexity.

It belongs to the AMT4 thioesterase family.

The protein localises to the membrane. Its pathway is secondary metabolite biosynthesis. Its function is as follows. Thioesterase; part of the gene cluster that mediates the biosynthesis of pyranterreones, a family of antioxidative compounds. The first step of pyranonigrins biosynthesis is performed by the hybrid PKS-NRPS synthetase pytA that condenses 4 malonyl-CoA units ato the acetyl starter unit by the modular PKS of pytA. The acyl chain is then connected to an L-serine through the amide bond by the modular NRPS of pytA. A tetramic acid is formed and released from the PKS-NRPS pytA to give pyranterreone 5 with the help of the thioesterase pytI. Pyranterreone 5 could be methylated by pytC to afford pyranterreone 6. Both pyranterreones 5 and 6 are subsequently oxidized by the FAD-linked oxidoreductase pytB and the cytochrome P450 monooxygenase pytD to form the fused gamma-pyrone core, resulting in pyranterreones 7 and 11, respectively. The hydroxy group at C-8 of pyranterreones 7 and 11 are dehydrated by the aspartyl protease pytH to form a delta-7 double bond to give pyranterreones 3 and 1, 2 accordingly. The exo-methylene of pyranterreone 3 could be reduced into a pendant methyl by reductase pytE to provide pyranterreone 4, also known as cordylactam. Pyranterreone 4 can be reconverted to pyranterreone 3 through pytB-catalyzed dehydrogenation or further oxidized to pyranterreones 9 and 10. The polypeptide is Thioesterase pytI (Aspergillus terreus).